Consider the following 203-residue polypeptide: MSRIGKLAIPVPAGATVTVAGQTIKVKGPKGELELVLPEVITPKFDNNELSVNPRADLIQAANDVIEAETAKGKRPPTFAQSLSQDARTQWGTARARAANMVEGVTKGYSKTLELVGVGYRAQMQGVDLKLALGYSHDVIYKAPQGIKIEAPKPTEIIISGADKQAVGQVAAEIKKFRPPEPYKGKGIRLQGEYVRRKEGKKK.

It belongs to the universal ribosomal protein uL6 family. As to quaternary structure, part of the 50S ribosomal subunit.

In terms of biological role, this protein binds to the 23S rRNA, and is important in its secondary structure. It is located near the subunit interface in the base of the L7/L12 stalk, and near the tRNA binding site of the peptidyltransferase center. The sequence is that of Large ribosomal subunit protein uL6 from Hyphomonas neptunium (strain ATCC 15444).